Reading from the N-terminus, the 101-residue chain is DNA-binding protein HU (101 aa).

The protein belongs to the bacterial histone-like protein family. Homodimer.

In terms of biological role, histone-like DNA-binding protein which is capable of wrapping DNA to stabilize it, and thus to prevent its denaturation under extreme environmental conditions. This chain is DNA-binding protein HU (hup), found in Rickettsia bellii (strain RML369-C).